Here is a 165-residue protein sequence, read N- to C-terminus: Interferon gamma (165 aa).

Residues 1–23 form the signal peptide; sequence MKYTSYILAFQLCIVLGSLGCYC. Q24 bears the Pyrrolidone carboxylic acid mark. Residues N48 and N120 are each glycosylated (N-linked (GlcNAc...) asparagine).

The protein belongs to the type II (or gamma) interferon family. As to quaternary structure, homodimer. Interacts with IFNGR1 (via extracellular domain); this interaction promotes IFNGR1 dimerization. Released primarily from activated T lymphocytes.

Its subcellular location is the secreted. Type II interferon produced by immune cells such as T-cells and NK cells that plays crucial roles in antimicrobial, antiviral, and antitumor responses by activating effector immune cells and enhancing antigen presentation. Primarily signals through the JAK-STAT pathway after interaction with its receptor IFNGR1 to affect gene regulation. Upon IFNG binding, IFNGR1 intracellular domain opens out to allow association of downstream signaling components JAK2, JAK1 and STAT1, leading to STAT1 activation, nuclear translocation and transcription of IFNG-regulated genes. Many of the induced genes are transcription factors such as IRF1 that are able to further drive regulation of a next wave of transcription. Plays a role in class I antigen presentation pathway by inducing a replacement of catalytic proteasome subunits with immunoproteasome subunits. In turn, increases the quantity, quality, and repertoire of peptides for class I MHC loading. Increases the efficiency of peptide generation also by inducing the expression of activator PA28 that associates with the proteasome and alters its proteolytic cleavage preference. Up-regulates as well MHC II complexes on the cell surface by promoting expression of several key molecules such as cathepsins B/CTSB, H/CTSH, and L/CTSL. Participates in the regulation of hematopoietic stem cells during development and under homeostatic conditions by affecting their development, quiescence, and differentiation. This Cercocebus atys (Sooty mangabey) protein is Interferon gamma (IFNG).